The following is a 54-amino-acid chain: Ductus ejaculatorius peptide 99B (54 aa).

The signal sequence occupies residues 1–21; it reads MKTPLFLLLVVLASLLGLALS. At Gln22 the chain carries Pyrrolidone carboxylic acid. N-linked (GlcNAc...) asparagine glycosylation occurs at Asn25. A disulfide bridge connects residues Cys40 and Cys52. The propeptide occupies 53 to 54; the sequence is RK.

To paragonial peptide B. In terms of tissue distribution, ductus ejaculatorius.

The protein localises to the secreted. In terms of biological role, induces post-mating responses; increased oviposition and reduced receptivity. In Drosophila melanogaster (Fruit fly), this protein is Ductus ejaculatorius peptide 99B (Dup99B).